Here is a 345-residue protein sequence, read N- to C-terminus: Centromere protein L (345 aa).

Residues Ser-40 and Ser-54 each carry the phosphoserine modification.

It belongs to the CENP-L/IML3 family. Component of the CENPA-CAD complex, composed of CENPI, CENPK, CENPL, CENPO, CENPP, CENPQ, CENPR and CENPS. The CENPA-CAD complex interacts with the CENPA-NAC complex, at least composed of CENPA, CENPC, CENPH, CENPM, CENPN, CENPT and CENPU.

The protein resides in the nucleus. It localises to the chromosome. Its subcellular location is the centromere. Functionally, component of the CENPA-CAD (nucleosome distal) complex, a complex recruited to centromeres which is involved in assembly of kinetochore proteins, mitotic progression and chromosome segregation. May be involved in incorporation of newly synthesized CENPA into centromeres via its interaction with the CENPA-NAC complex. In Rattus norvegicus (Rat), this protein is Centromere protein L (Cenpl).